The chain runs to 1330 residues: Ubinuclein-2 (1330 aa).

A disordered region spans residues 1–133 (MAEPRRVAFI…PRETVRLELV (133 aa)). At Ser-13 the chain carries Phosphoserine. Basic and acidic residues-rich tracts occupy residues 16 to 37 (RRRE…EPPR) and 67 to 79 (PREK…EVSR). Residues 93 to 111 (PEPPPPPLPQLHLQPPPPR) show a composition bias toward pro residues. Residues 123–133 (PPRETVRLELV) show a composition bias toward basic and acidic residues. Residue Thr-244 is modified to Phosphothreonine. Residues 249 to 304 (QASDTEEDDTTDNQKHKPPKIPKIKEDDIEMKKRKRKEEGEKEKKPRKKVPKQLGV) form a disordered region. Ser-251 carries the post-translational modification Phosphoserine. Thr-253 carries the post-translational modification Phosphothreonine. Lys-273 participates in a covalent cross-link: Glycyl lysine isopeptide (Lys-Gly) (interchain with G-Cter in SUMO2). Ser-312 carries the phosphoserine modification. A disordered region spans residues 336 to 356 (KDALKKESNPKTPLNFSTSSL). Polar residues predominate over residues 345–356 (PKTPLNFSTSSL). 4 positions are modified to phosphoserine: Ser-417, Ser-420, Ser-423, and Ser-585. Disordered regions lie at residues 574-597 (FQTD…GKRV), 672-730 (LTSA…STPV), 802-833 (PKKL…DLAH), 864-913 (GLQR…VTKV), 938-988 (PVVK…SRTV), 1017-1201 (MAAS…GSSV), and 1308-1330 (HVQQ…RKSQ). Composition is skewed to basic and acidic residues over residues 575 to 585 (QTDEEREKNGS) and 688 to 699 (KVKECSPKKDQK). Low complexity predominate over residues 701 to 730 (PASSVASVGGPSTSSSTSAVASTSSGSTPV). The span at 807–816 (STQTAHSSSL) shows a compositional bias: polar residues. Low complexity predominate over residues 864 to 895 (GLQRSSQIHASSSSQTHVSSSSQAQVAASSHT). 2 stretches are compositionally biased toward polar residues: residues 896–913 (LGTS…VTKV) and 938–956 (PVVK…PLTK). The segment covering 1017-1029 (MAASPKLASSPKP) has biased composition (low complexity). The span at 1030 to 1044 (ATSPKPLPSPKPSAS) shows a compositional bias: pro residues. 2 stretches are compositionally biased toward low complexity: residues 1045–1054 (PKPSQSAKPS) and 1061–1079 (SKSN…SSPN). An N6-acetyllysine modification is found at Lys-1052. 3 stretches are compositionally biased toward polar residues: residues 1082–1148 (VAQS…NSLS), 1158–1169 (RGSNLNSSGANR), and 1308–1317 (HVQQTFNDGG). Ser-1107 is subject to Phosphoserine. Residue Lys-1132 is modified to N6-acetyllysine. The segment covering 1321 to 1330 (GDTKLPRKSQ) has biased composition (basic and acidic residues).

It belongs to the ubinuclein family.

This Bos taurus (Bovine) protein is Ubinuclein-2 (UBN2).